The chain runs to 304 residues: MADSGSEPRSLLLVHAHPDDESIDNGATMARYAAAGVNVTLVTCTLGEEGDVVVPELAHLGAAYEDRLADHRAGELDAAMAALGVTDHRILNEQNRYRDSGMMGSPSNDHPRSFWRADVEEAARSLAHIIRELRPQVLVTYGPDGGYGHPDHIQAHRVAMRAAQLAGQAGQADASQNARLPHAVAKIYWNCHPRSAARFSTKALRAEEQTPFLLDESAISVTDDSFATCVIDASDHLAAKSAALSAHRTQMTVQGAFFALSNNVGRLISGEEYYHLAYCRPDLAVDEPEDHAAPDLESDLFAGL.

Positions 17, 20, and 152 each coordinate Zn(2+).

This sequence belongs to the MshB deacetylase family. It depends on Zn(2+) as a cofactor.

The catalysed reaction is 1D-myo-inositol 2-acetamido-2-deoxy-alpha-D-glucopyranoside + H2O = 1D-myo-inositol 2-amino-2-deoxy-alpha-D-glucopyranoside + acetate. Functionally, catalyzes the deacetylation of 1D-myo-inositol 2-acetamido-2-deoxy-alpha-D-glucopyranoside (GlcNAc-Ins) in the mycothiol biosynthesis pathway. The sequence is that of 1D-myo-inositol 2-acetamido-2-deoxy-alpha-D-glucopyranoside deacetylase 2 from Catenulispora acidiphila (strain DSM 44928 / JCM 14897 / NBRC 102108 / NRRL B-24433 / ID139908).